Reading from the N-terminus, the 989-residue chain is Cellulose synthase A catalytic subunit 4 [UDP-forming] (989 aa).

The Cytoplasmic segment spans residues 1 to 184 (MMESGVPPCA…SRIIPISKNK (184 aa)). Residues Cys9, Cys12, Cys20, Cys23, Cys28, Cys31, Cys43, and Cys46 each contribute to the Zn(2+) site. The RING-type; degenerate zinc finger occupies 9–47 (CAACGDDAHAACRACSYALCKACLDEDAAEGRTTCARCG). Over residues 138 to 149 (KKEKKASAKKAA) the composition is skewed to basic residues. Positions 138-158 (KKEKKASAKKAAAKAQAPPVE) are disordered. Residues 185 to 205 (LTPYRAVIIMRLVVLGLFFHY) traverse the membrane as a helical segment. Residues 206–213 (RITNPVYS) lie on the Extracellular side of the membrane. Residues 214–234 (AFGLWMTSVICEIWFGFSWIL) traverse the membrane as a helical segment. The Cytoplasmic portion of the chain corresponds to 235 to 772 (DQFPKWCPIN…INTIVYPFTS (538 aa)). Residues Ser272, Lys278, Glu279, and Asp308 each coordinate UDP-alpha-D-glucose. The active site involves Asp308. Residues 362 to 389 (VKERRAMKRDYEEYKVRINALVAKAQKT) are a coiled coil. Lys449 lines the UDP-alpha-D-glucose pocket. 2 residues coordinate Mn(2+): Lys450 and Asp474. Asp688 is an active-site residue. Residues 773 to 793 (LPLIAYCCLPAICLLTGKFII) form a helical membrane-spanning segment. At 794 to 798 (PTLSN) the chain is on the extracellular side. Residues 799–819 (AATIWFLGLFISIIVTSVLEL) traverse the membrane as a helical segment. At 820-835 (RWSGIGIEDWWRNEQF) the chain is on the cytoplasmic side. The helical transmembrane segment at 836-856 (WVIGGVSAHLFAVFQGILKMI) threads the bilayer. Residues 857–884 (AGLDTNFTVTAKATDDTEFGELYVFKWT) lie on the Extracellular side of the membrane. N-linked (GlcNAc...) asparagine glycosylation occurs at Asn862. Residues 885–905 (TVLIPPTSILVLNLVGVVAGF) form a helical membrane-spanning segment. The Cytoplasmic portion of the chain corresponds to 906–916 (SDALNSGYESW). The chain crosses the membrane as a helical span at residues 917–937 (GPLFGKVFFAMWVIMHLYPFL). The Extracellular portion of the chain corresponds to 938–946 (KGLMGRQNR). The chain crosses the membrane as a helical span at residues 947-967 (TPTIVVLWSVLLASVFSLLWV). Residues 968-989 (KIDPFIGSSETTTTNSCANFDC) are Cytoplasmic-facing.

This sequence belongs to the glycosyltransferase 2 family. Plant cellulose synthase subfamily. It depends on Mn(2+) as a cofactor. The cofactor is Zn(2+).

It localises to the cell membrane. It carries out the reaction [(1-&gt;4)-beta-D-glucosyl](n) + UDP-alpha-D-glucose = [(1-&gt;4)-beta-D-glucosyl](n+1) + UDP + H(+). Its pathway is glycan metabolism; plant cellulose biosynthesis. In terms of biological role, catalytic subunit of cellulose synthase terminal complexes ('rosettes'), required for beta-1,4-glucan microfibril crystallization, a major mechanism of the cell wall formation. Involved in the secondary cell wall formation. The chain is Cellulose synthase A catalytic subunit 4 [UDP-forming] (CESA4) from Oryza sativa subsp. japonica (Rice).